The chain runs to 200 residues: Potassium-transporting ATPase KdpC subunit (200 aa).

The helical transmembrane segment at 9-31 (LVMLVALTALTGLVYPLAMTGVA) threads the bilayer. The tract at residues 68–97 (GRPSATTAPDPQDSSKTVPSPYNAANSMGA) is disordered. Over residues 71–96 (SATTAPDPQDSSKTVPSPYNAANSMG) the composition is skewed to polar residues.

Belongs to the KdpC family. The system is composed of three essential subunits: KdpA, KdpB and KdpC.

It localises to the cell inner membrane. In terms of biological role, part of the high-affinity ATP-driven potassium transport (or Kdp) system, which catalyzes the hydrolysis of ATP coupled with the electrogenic transport of potassium into the cytoplasm. This subunit acts as a catalytic chaperone that increases the ATP-binding affinity of the ATP-hydrolyzing subunit KdpB by the formation of a transient KdpB/KdpC/ATP ternary complex. In Rhodopseudomonas palustris (strain BisA53), this protein is Potassium-transporting ATPase KdpC subunit.